The sequence spans 326 residues: uncharacterized protein (326 aa).

127 to 134 (GATGSGKS) lines the ATP pocket.

The protein belongs to the GSP E family.

This is an uncharacterized protein from Escherichia coli (strain K12).